Here is a 317-residue protein sequence, read N- to C-terminus: Ribosomal protein L11 methyltransferase (317 aa).

4 residues coordinate S-adenosyl-L-methionine: Thr-158, Gly-179, Asp-201, and Asn-244.

Belongs to the methyltransferase superfamily. PrmA family.

The protein resides in the cytoplasm. The catalysed reaction is L-lysyl-[protein] + 3 S-adenosyl-L-methionine = N(6),N(6),N(6)-trimethyl-L-lysyl-[protein] + 3 S-adenosyl-L-homocysteine + 3 H(+). In terms of biological role, methylates ribosomal protein L11. The chain is Ribosomal protein L11 methyltransferase from Lactococcus lactis subsp. lactis (strain IL1403) (Streptococcus lactis).